A 118-amino-acid polypeptide reads, in one-letter code: RxLR effector protein PITG_19617 (118 aa).

The first 21 residues, 1–21 (MRAVYILAMACAATLQASSSA), serve as a signal peptide directing secretion. Positions 50-64 (RLLRVEDKEEETEEE) match the RxLR-dEER motif.

This sequence belongs to the RxLR effector family.

It localises to the secreted. The protein localises to the host nucleus. The protein resides in the host cytoplasm. Effector that enhances P.infestans colonization of Nicotiana benthamiana leaves. This Phytophthora infestans (strain T30-4) (Potato late blight agent) protein is RxLR effector protein PITG_19617.